The primary structure comprises 238 residues: Tritrans,polycis-undecaprenyl-diphosphate synthase (geranylgeranyl-diphosphate specific) (238 aa).

Residue Asp-18 is part of the active site. Residue Asp-18 participates in Mg(2+) binding. Substrate contacts are provided by residues 19–22 and 64–66; these read GNRR and STE. Asn-67 acts as the Proton acceptor in catalysis. Residues Arg-70, Arg-187, and 193–195 each bind substrate; that span reads RLS. Residue Glu-206 coordinates Mg(2+).

Belongs to the UPP synthase family. As to quaternary structure, homodimer. The cofactor is Mg(2+).

It carries out the reaction geranylgeranyl diphosphate + 7 isopentenyl diphosphate = tri-trans,hepta-cis-undecaprenyl diphosphate + 7 diphosphate. Its function is as follows. Catalyzes the sequential condensation of isopentenyl diphosphate (IPP) with geranylgeranyl diphosphate (GGPP) to yield (2Z,6Z,10Z,14Z,18Z,22Z,26Z,30E,34E,38E)-undecaprenyl diphosphate (tritrans,heptacis-UPP). It is probably the precursor of glycosyl carrier lipids. The protein is Tritrans,polycis-undecaprenyl-diphosphate synthase (geranylgeranyl-diphosphate specific) of Pyrobaculum aerophilum (strain ATCC 51768 / DSM 7523 / JCM 9630 / CIP 104966 / NBRC 100827 / IM2).